The sequence spans 131 residues: NADH-quinone oxidoreductase subunit I 2 (131 aa).

4Fe-4S ferredoxin-type domains follow at residues Leu42–Gly71 and Glu81–Glu110. The [4Fe-4S] cluster site is built by Cys51, Cys54, Cys57, Cys61, Cys90, Cys93, Cys96, and Cys100.

Belongs to the complex I 23 kDa subunit family. NDH-1 is composed of 14 different subunits. Subunits NuoA, H, J, K, L, M, N constitute the membrane sector of the complex. It depends on [4Fe-4S] cluster as a cofactor.

The protein resides in the cell inner membrane. It carries out the reaction a quinone + NADH + 5 H(+)(in) = a quinol + NAD(+) + 4 H(+)(out). NDH-1 shuttles electrons from NADH, via FMN and iron-sulfur (Fe-S) centers, to quinones in the respiratory chain. The immediate electron acceptor for the enzyme in this species is believed to be ubiquinone. Couples the redox reaction to proton translocation (for every two electrons transferred, four hydrogen ions are translocated across the cytoplasmic membrane), and thus conserves the redox energy in a proton gradient. The sequence is that of NADH-quinone oxidoreductase subunit I 2 from Geobacter metallireducens (strain ATCC 53774 / DSM 7210 / GS-15).